Here is a 153-residue protein sequence, read N- to C-terminus: Ribonuclease H (153 aa).

The region spanning 4-146 (NNEIVEIYTD…CDRLATEQIK (143 aa)) is the RNase H type-1 domain. Mg(2+) is bound by residues Asp13, Glu51, Asp73, and Asp138.

Belongs to the RNase H family. In terms of assembly, monomer. Mg(2+) serves as cofactor.

It is found in the cytoplasm. It carries out the reaction Endonucleolytic cleavage to 5'-phosphomonoester.. Functionally, endonuclease that specifically degrades the RNA of RNA-DNA hybrids. The sequence is that of Ribonuclease H from Caldanaerobacter subterraneus subsp. tengcongensis (strain DSM 15242 / JCM 11007 / NBRC 100824 / MB4) (Thermoanaerobacter tengcongensis).